The following is a 498-amino-acid chain: MTVFLSFAFLAAILTHIGCSNQRRSPENSGRRYNRIQHGQCAYTFILPEHDGNCRESTTDQYNTNALQRDAPHVEPDFSSQKLQHLEHVMENYTQWLQKLENYIVENMKSEMAQIQQNAVQNHTATMLEIGTSLLSQTAEQTRKLTDVETQVLNQTSRLEIQLLENSLSTYKLEKQLLQQTNEILKIHEKNSLLEHKILEMEGKHKEELDTLKEEKENLQGLVTRQTYIIQELEKQLNRATTNNSVLQKQQLELMDTVHNLVNLCTKEGVLLKGGKREEEKPFRDCADVYQAGFNKSGIYTIYINNMPEPKKVFCNMDVNGGGWTVIQHREDGSLDFQRGWKEYKMGFGNPSGEYWLGNEFIFAITSQRQYMLRIELMDWEGNRAYSQYDRFHIGNEKQNYRLYLKGHTGTAGKQSSLILHGADFSTKDADNDNCMCKCALMLTGGWWFDACGPSNLNGMFYTAGQNHGKLNGIKWHYFKGPSYSLRSTTMMIRPLDF.

The signal sequence occupies residues 1–15 (MTVFLSFAFLAAILT). A coiled-coil region spans residues 81 to 119 (QKLQHLEHVMENYTQWLQKLENYIVENMKSEMAQIQQNA). N-linked (GlcNAc...) asparagine glycans are attached at residues Asn92, Asn122, Asn154, Asn243, and Asn295. The stretch at 153-261 (LNQTSRLEIQ…LELMDTVHNL (109 aa)) forms a coiled coil. One can recognise a Fibrinogen C-terminal domain in the interval 277–497 (REEEKPFRDC…STTMMIRPLD (221 aa)). Intrachain disulfides connect Cys286–Cys315 and Cys439–Cys452.

As to quaternary structure, homooligomer. Interacts with TEK/TIE2. Interacts with SVEP1/polydom. Interacts with THBD; this interaction significantly inhibits the generation of activated PC and TAFIa/CPB2 by the thrombin/thrombomodulin complex. Post-translationally, glycosylated.

It is found in the secreted. Binds and activates TEK/TIE2 receptor by inducing its dimerization and tyrosine phosphorylation. Plays an important role in the regulation of angiogenesis, endothelial cell survival, proliferation, migration, adhesion and cell spreading, reorganization of the actin cytoskeleton, but also maintenance of vascular quiescence. Required for normal angiogenesis and heart development during embryogenesis. After birth, activates or inhibits angiogenesis, depending on the context. Inhibits angiogenesis and promotes vascular stability in quiescent vessels, where endothelial cells have tight contacts. In quiescent vessels, ANGPT1 oligomers recruit TEK to cell-cell contacts, forming complexes with TEK molecules from adjoining cells, and this leads to preferential activation of phosphatidylinositol 3-kinase and the AKT1 signaling cascades. In migrating endothelial cells that lack cell-cell adhesions, ANGT1 recruits TEK to contacts with the extracellular matrix, leading to the formation of focal adhesion complexes, activation of PTK2/FAK and of the downstream kinases MAPK1/ERK2 and MAPK3/ERK1, and ultimately to the stimulation of sprouting angiogenesis. Mediates blood vessel maturation/stability. Implicated in endothelial developmental processes later and distinct from that of VEGF. Appears to play a crucial role in mediating reciprocal interactions between the endothelium and surrounding matrix and mesenchyme. This Homo sapiens (Human) protein is Angiopoietin-1 (ANGPT1).